Consider the following 303-residue polypeptide: Ribosomal RNA small subunit methyltransferase A (303 aa).

Residues Asn-37, Val-39, Gly-64, Glu-85, Asp-115, and Asn-138 each contribute to the S-adenosyl-L-methionine site.

The protein belongs to the class I-like SAM-binding methyltransferase superfamily. rRNA adenine N(6)-methyltransferase family. RsmA subfamily.

The protein resides in the cytoplasm. It catalyses the reaction adenosine(1518)/adenosine(1519) in 16S rRNA + 4 S-adenosyl-L-methionine = N(6)-dimethyladenosine(1518)/N(6)-dimethyladenosine(1519) in 16S rRNA + 4 S-adenosyl-L-homocysteine + 4 H(+). Specifically dimethylates two adjacent adenosines (A1518 and A1519) in the loop of a conserved hairpin near the 3'-end of 16S rRNA in the 30S particle. May play a critical role in biogenesis of 30S subunits. The protein is Ribosomal RNA small subunit methyltransferase A of Bifidobacterium adolescentis (strain ATCC 15703 / DSM 20083 / NCTC 11814 / E194a).